Consider the following 165-residue polypeptide: MVGLSRLAGGGLLLVLALLPLALDGKPAPEALHKPPTGLRTSLAALRILGYLRPDSKQSRAARDRMLHPEQQVGGGGDSRPLQDETNKGKGSSCFGQKIDRIGSMSGMGCRTQGKPPPALPTAPAALRILEYLRPDSKRSRATRDRMLHPEQQVGGGGGGGSRVI.

The first 25 residues, 1-25 (MVGLSRLAGGGLLLVLALLPLALDG), serve as a signal peptide directing secretion. Positions 26-83 (KPAPEALHKPPTGLRTSLAALRILGYLRPDSKQSRAARDRMLHPEQQVGGGGDSRPLQ) are excised as a propeptide. Over residues 56–68 (SKQSRAARDRMLH) the composition is skewed to basic and acidic residues. Disordered regions lie at residues 56 to 100 (SKQS…QKID) and 135 to 165 (PDSK…SRVI). The cysteines at positions 94 and 110 are disulfide-linked. A propeptide spanning residues 129–165 (ILEYLRPDSKRSRATRDRMLHPEQQVGGGGGGGSRVI) is cleaved from the precursor. The span at 135–149 (PDSKRSRATRDRMLH) shows a compositional bias: basic and acidic residues. Residues 154-165 (VGGGGGGGSRVI) show a composition bias toward gly residues.

Belongs to the natriuretic peptide family. In terms of tissue distribution, expressed by the venom gland.

The protein localises to the secreted. Functionally, natriuretic peptide that dose-dependently induces the rapid relaxation of rat aortic strips phenylephrine-precontracted. Acts by stimulating cGMP production in a dose-dependent manner (by probably activating NPR1 and/or NPR2). May also show potent hypotensive effects. The chain is Natriuretic peptide Na-NP from Naja atra (Chinese cobra).